The primary structure comprises 357 residues: MSDKTPRKPTAFRLEQPARVSAASEQEEPRRPRAVKDLEQITPQADVFDLTDDEAAELEILDPAFEAPERKGWSLSRILFGALGILVSFAIGIWTEDLIRALFARADWLGWTALGVAMVALAAFAAIILRELVALRRLASVQHLRKDAADAAERDDMAAARKAVDALRTIAAGIPETAKGRQLLDSLTDDIIDGRDLIRLAETEILRPLDREARTLVLNASKRVSIVTAISPRALVDIGYVIFESARLIRRLSQLYGGRPGTFGFIKLARRVIAHLAVTGTIAMGDSVIQQLVGHGLASRLSAKLGEGVVNGLMTARIGIAAMDVVRPFPFNAEKRPGIGDFIGDLARLNSDRNARK.

Positions 1-36 (MSDKTPRKPTAFRLEQPARVSAASEQEEPRRPRAVK) are disordered. Positions 27 to 36 (EEPRRPRAVK) are enriched in basic and acidic residues. Helical transmembrane passes span 78–98 (ILFG…TEDL) and 109–129 (LGWT…AIIL).

It belongs to the UPF0283 family.

It localises to the cell inner membrane. The sequence is that of UPF0283 membrane protein BCAN_A1047 from Brucella canis (strain ATCC 23365 / NCTC 10854 / RM-666).